A 427-amino-acid polypeptide reads, in one-letter code: Imidazolonepropionase (427 aa).

Residues His78 and His80 each contribute to the Fe(3+) site. Residues His78 and His80 each coordinate Zn(2+). Residues Arg87, Tyr150, and His183 each contribute to the 4-imidazolone-5-propanoate site. Tyr150 provides a ligand contact to N-formimidoyl-L-glutamate. Position 255 (His255) interacts with Fe(3+). Residue His255 participates in Zn(2+) binding. 4-imidazolone-5-propanoate is bound at residue Glu258. Asp330 is a Fe(3+) binding site. Residue Asp330 coordinates Zn(2+). N-formimidoyl-L-glutamate is bound by residues Asn332 and Gly334. A 4-imidazolone-5-propanoate-binding site is contributed by Thr335.

Belongs to the metallo-dependent hydrolases superfamily. HutI family. Zn(2+) serves as cofactor. The cofactor is Fe(3+).

It localises to the cytoplasm. It catalyses the reaction 4-imidazolone-5-propanoate + H2O = N-formimidoyl-L-glutamate. Its pathway is amino-acid degradation; L-histidine degradation into L-glutamate; N-formimidoyl-L-glutamate from L-histidine: step 3/3. Functionally, catalyzes the hydrolytic cleavage of the carbon-nitrogen bond in imidazolone-5-propanoate to yield N-formimidoyl-L-glutamate. It is the third step in the universal histidine degradation pathway. This Herpetosiphon aurantiacus (strain ATCC 23779 / DSM 785 / 114-95) protein is Imidazolonepropionase.